The chain runs to 603 residues: Phosphogluconate dehydratase (603 aa).

2 residues coordinate [4Fe-4S] cluster: Cys-154 and Cys-221.

The protein belongs to the IlvD/Edd family. It depends on [4Fe-4S] cluster as a cofactor.

It catalyses the reaction 6-phospho-D-gluconate = 2-dehydro-3-deoxy-6-phospho-D-gluconate + H2O. Its pathway is carbohydrate metabolism; Entner-Doudoroff pathway. Catalyzes the dehydration of 6-phospho-D-gluconate to 2-dehydro-3-deoxy-6-phospho-D-gluconate. This chain is Phosphogluconate dehydratase, found in Escherichia coli O157:H7.